Here is a 337-residue protein sequence, read N- to C-terminus: Glucose transporter 2C (337 aa).

A disordered region spans residues 1-22 (MTERRDNVSHAPDAIEGPNDGA). The Cytoplasmic segment spans residues 1–43 (MTERRDNVSHAPDAIEGPNDGAHAEDTSPGFFSLENLGVAQVQ). Residues 44–64 (VVGGTLNGFSIGFVAVYILLY) form a helical membrane-spanning segment. The Extracellular portion of the chain corresponds to 65–119 (EVATNCSLFKTTEACKAVGSYGCEWKDTEVCSWKKECDSDSDGVNPCESLIGYSS). Asn-69 carries an N-linked (GlcNAc...) asparagine glycan. The helical transmembrane segment at 120–140 (LYSGIFASAMIVGSMVGSIIA) threads the bilayer. At 141 to 152 (GKCITMFGLKKS) the chain is on the cytoplasmic side. A helical transmembrane segment spans residues 153 to 173 (FIIVGVMSVVASALNHISVAT). At 174–175 (NE) the chain is on the extracellular side. Residues 176–196 (FWVLCAGRVLMGIGLGVVCVI) traverse the membrane as a helical segment. Residues 197–214 (CPMYVNENAHPKLSKVDG) lie on the Cytoplasmic side of the membrane. A helical transmembrane segment spans residues 215–235 (VLFQVFITFGIMLAAMLGLIL). The Extracellular segment spans residues 236–250 (DKTVNYDNDPDMAGR). Residues 251–271 (FHGFCAVSSVLSVAMFLVGMF) traverse the membrane as a helical segment. Residues 272–300 (LRESTATFSQDDDGKADGGMDPNEYGWGQ) are Cytoplasmic-facing. The chain crosses the membrane as a helical span at residues 301–321 (MLWPLFMGAVTAGTLQLTGIN). The Extracellular segment spans residues 322–337 (AVMNYAPKITENLGMD).

This sequence belongs to the major facilitator superfamily. Sugar transporter (TC 2.A.1.1) family.

The protein localises to the membrane. Its function is as follows. Facilitative glucose transporter. The protein is Glucose transporter 2C (THT2C) of Trypanosoma brucei brucei.